The primary structure comprises 858 residues: Putative glutamate--cysteine ligase 2-3 (858 aa).

Positions 1 to 372 (MSDARNVAVG…RDVPPAGASL (372 aa)) are carboxylate-amine ligase. The tract at residues 373 to 858 (GVAPAVSAPD…GSKDTWIPRR (486 aa)) is unknown.

The protein in the N-terminal section; belongs to the glutamate--cysteine ligase type 2 family. YbdK subfamily.

The catalysed reaction is L-cysteine + L-glutamate + ATP = gamma-L-glutamyl-L-cysteine + ADP + phosphate + H(+). In terms of biological role, ATP-dependent carboxylate-amine ligase which exhibits weak glutamate--cysteine ligase activity. The protein is Putative glutamate--cysteine ligase 2-3 of Frankia alni (strain DSM 45986 / CECT 9034 / ACN14a).